Consider the following 114-residue polypeptide: MMDFLSKTPEPPYYAVIFSSVKSENDTGYGETAERMVSLAADQPGFLGVESVREADGRGITVSYWDSMDAINHWRHHTEHQAAKEKGRSVWYESYAVRVAKVDRQRLFQENTND.

One can recognise an ABM domain in the interval 13–99 (YYAVIFSSVK…VWYESYAVRV (87 aa)).

This is an uncharacterized protein from Bacillus subtilis (strain 168).